The sequence spans 158 residues: N-acetylgalactosamine-specific phosphotransferase enzyme IIB component 1 (158 aa).

A PTS EIIB type-4 domain is found at 1-158 (MTSPNILLTR…PGDQKEQIPD (158 aa)). The active-site Pros-phosphohistidine intermediate is the histidine 17.

It localises to the cytoplasm. Functionally, the phosphoenolpyruvate-dependent sugar phosphotransferase system (sugar PTS), a major carbohydrate active -transport system, catalyzes the phosphorylation of incoming sugar substrates concomitantly with their translocation across the cell membrane. This system is involved in N-acetylgalactosamine transport. This chain is N-acetylgalactosamine-specific phosphotransferase enzyme IIB component 1 (agaB), found in Escherichia coli (strain K12).